The sequence spans 88 residues: MQVTDVRIRKITNEGRMKAIVSVTFDNCFVVHDIKIIEGQNGLFIAMPSRKTPEGEFKDIAHPINQEMRDMVQKAVIEKYEAVISAGE.

It belongs to the SpoVG family.

Functionally, could be involved in septation. The polypeptide is Putative septation protein SpoVG (Caldicellulosiruptor saccharolyticus (strain ATCC 43494 / DSM 8903 / Tp8T 6331)).